Consider the following 699-residue polypeptide: Polyribonucleotide nucleotidyltransferase (699 aa).

Mg(2+) is bound by residues Asp485 and Asp491. One can recognise a KH domain in the interval Pro552 to Ile611. In terms of domain architecture, S1 motif spans Gly621 to Lys689.

It belongs to the polyribonucleotide nucleotidyltransferase family. Component of the RNA degradosome, which is a multiprotein complex involved in RNA processing and mRNA degradation. Mg(2+) is required as a cofactor.

It localises to the cytoplasm. The enzyme catalyses RNA(n+1) + phosphate = RNA(n) + a ribonucleoside 5'-diphosphate. In terms of biological role, involved in mRNA degradation. Catalyzes the phosphorolysis of single-stranded polyribonucleotides processively in the 3'- to 5'-direction. The chain is Polyribonucleotide nucleotidyltransferase from Shewanella sp. (strain W3-18-1).